We begin with the raw amino-acid sequence, 223 residues long: MKRTKKINHSSFRKSWSARHLTPVALAVTAVFMLAGCEKSDETVSLYQNADDCSAANPGKAAECTTAYTNAVKEAERTAPKYATREDCVAEFGEGQCQQTPAQAGVAPENQAQAQSSGSFWMPLMAGYMMGRLMGGGMAQQQPLFSSKNPASPAYGQYTDASGKSYGAAQPGRTMNVPKTAMAPKPATTTTVTRGGFGESVAKQSTMQRSAAGSTSSSRSMGG.

The segment at 165-223 is disordered; that stretch reads SYGAAQPGRTMNVPKTAMAPKPATTTTVTRGGFGESVAKQSTMQRSAAGSTSSSRSMGG. Composition is skewed to low complexity over residues 177–193 and 209–223; these read VPKTAMAPKPATTTTVT and RSAAGSTSSSRSMGG.

This sequence belongs to the UPF0441 family.

This chain is UPF0441 protein KPK_0672, found in Klebsiella pneumoniae (strain 342).